Reading from the N-terminus, the 1486-residue chain is Chromosome partition protein MukB (1486 aa).

34 to 41 (GGNGAGKS) contacts ATP. Coiled coils occupy residues 326-418 (LEAD…QYNQ), 444-480 (LETF…QAYQ), and 509-603 (RHLA…RAPV). The flexible hinge stretch occupies residues 666–783 (PGGSEDQRLN…EVPLFGRAAR (118 aa)). Coiled coils occupy residues 835 to 923 (EAEI…AKLE), 977 to 1115 (EMLS…TAKA), and 1209 to 1266 (VEAI…QNVS).

This sequence belongs to the SMC family. MukB subfamily. As to quaternary structure, homodimerization via its hinge domain. Binds to DNA via its C-terminal region. Interacts, and probably forms a ternary complex, with MukE and MukF via its C-terminal region. The complex formation is stimulated by calcium or magnesium. Interacts with tubulin-related protein FtsZ.

It is found in the cytoplasm. The protein resides in the nucleoid. Plays a central role in chromosome condensation, segregation and cell cycle progression. Functions as a homodimer, which is essential for chromosome partition. Involved in negative DNA supercoiling in vivo, and by this means organize and compact chromosomes. May achieve or facilitate chromosome segregation by condensation DNA from both sides of a centrally located replisome during cell division. This Escherichia coli O1:K1 / APEC protein is Chromosome partition protein MukB.